The sequence spans 44 residues: Non-structural protein 7b (44 aa).

A helical membrane pass occupies residues 9-29; that stretch reads FYLCFLAFLLFLVLIMLLIFW.

The protein localises to the host membrane. In Bat coronavirus HKU3 (BtCoV), this protein is Non-structural protein 7b.